The chain runs to 406 residues: Probable endo-xylogalacturonan hydrolase A (406 aa).

The N-terminal stretch at Met1–Ala18 is a signal peptide. PbH1 repeat units lie at residues Ala183 to Ser213, Ser214 to Pro235, Cys237 to Ser257, and Val299 to Ser320. Catalysis depends on Asp228, which acts as the Proton donor. N-linked (GlcNAc...) asparagine glycosylation is present at Asn244. His251 is an active-site residue. Asn301 carries N-linked (GlcNAc...) asparagine glycosylation.

It belongs to the glycosyl hydrolase 28 family.

It is found in the secreted. In terms of biological role, pectinolytic enzyme involved in the degradation of xylogalacturonan (xga), a galacturonan backbone heavily substituted with xylose, and which is one important component of the hairy regions of pectin. Activity requires a galacturonic acid backbone substituted with xylose. This chain is Probable endo-xylogalacturonan hydrolase A (xghA), found in Neosartorya fischeri (strain ATCC 1020 / DSM 3700 / CBS 544.65 / FGSC A1164 / JCM 1740 / NRRL 181 / WB 181) (Aspergillus fischerianus).